The primary structure comprises 483 residues: Altronate oxidoreductase (483 aa).

18–29 (IIQFGEGNFLRA) serves as a coordination point for NAD(+).

This sequence belongs to the mannitol dehydrogenase family. UxaB subfamily.

The enzyme catalyses D-altronate + NAD(+) = keto-D-tagaturonate + NADH + H(+). The protein operates within carbohydrate metabolism; pentose and glucuronate interconversion. The polypeptide is Altronate oxidoreductase (Shigella flexneri serotype 5b (strain 8401)).